The following is a 130-amino-acid chain: Small ribosomal subunit protein uS8 (130 aa).

This sequence belongs to the universal ribosomal protein uS8 family. As to quaternary structure, part of the 30S ribosomal subunit. Contacts proteins S5 and S12.

In terms of biological role, one of the primary rRNA binding proteins, it binds directly to 16S rRNA central domain where it helps coordinate assembly of the platform of the 30S subunit. This is Small ribosomal subunit protein uS8 from Vibrio vulnificus (strain CMCP6).